The following is a 264-amino-acid chain: Ribosomal protein L11 methyltransferase (264 aa).

Positions 116, 137, 159, and 200 each coordinate S-adenosyl-L-methionine.

Belongs to the methyltransferase superfamily. PrmA family.

It localises to the cytoplasm. It carries out the reaction L-lysyl-[protein] + 3 S-adenosyl-L-methionine = N(6),N(6),N(6)-trimethyl-L-lysyl-[protein] + 3 S-adenosyl-L-homocysteine + 3 H(+). Its function is as follows. Methylates ribosomal protein L11. This Thermotoga maritima (strain ATCC 43589 / DSM 3109 / JCM 10099 / NBRC 100826 / MSB8) protein is Ribosomal protein L11 methyltransferase.